The primary structure comprises 365 residues: Alanine racemase (365 aa).

Lysine 32 acts as the Proton acceptor; specific for D-alanine in catalysis. Lysine 32 is subject to N6-(pyridoxal phosphate)lysine. Substrate is bound at residue arginine 128. The Proton acceptor; specific for L-alanine role is filled by tyrosine 257. Methionine 305 is a substrate binding site.

The protein belongs to the alanine racemase family. Pyridoxal 5'-phosphate serves as cofactor.

It carries out the reaction L-alanine = D-alanine. It participates in amino-acid biosynthesis; D-alanine biosynthesis; D-alanine from L-alanine: step 1/1. Functionally, catalyzes the interconversion of L-alanine and D-alanine. May also act on other amino acids. The polypeptide is Alanine racemase (alr) (Francisella tularensis subsp. holarctica (strain OSU18)).